The following is a 112-amino-acid chain: uncharacterized protein (112 aa).

Phosphoserine is present on residues Ser51 and Ser53. Residues 90-110 traverse the membrane as a helical segment; that stretch reads FIFTLSMFLIAFILLIAFVSF.

It localises to the golgi apparatus membrane. The protein resides in the endoplasmic reticulum membrane. This is an uncharacterized protein from Schizosaccharomyces pombe (strain 972 / ATCC 24843) (Fission yeast).